The chain runs to 506 residues: ATP synthase subunit alpha, chloroplastic (506 aa).

170 to 177 (GDRQTGKT) contributes to the ATP binding site. A Phosphothreonine modification is found at T257.

Belongs to the ATPase alpha/beta chains family. As to quaternary structure, F-type ATPases have 2 components, CF(1) - the catalytic core - and CF(0) - the membrane proton channel. CF(1) has five subunits: alpha(3), beta(3), gamma(1), delta(1), epsilon(1). CF(0) has four main subunits: a, b, b' and c.

The protein resides in the plastid. Its subcellular location is the chloroplast thylakoid membrane. The catalysed reaction is ATP + H2O + 4 H(+)(in) = ADP + phosphate + 5 H(+)(out). In terms of biological role, produces ATP from ADP in the presence of a proton gradient across the membrane. The alpha chain is a regulatory subunit. This is ATP synthase subunit alpha, chloroplastic from Olimarabidopsis pumila (Dwarf rocket).